The primary structure comprises 89 residues: Small ribosomal subunit protein uS15 (89 aa).

It belongs to the universal ribosomal protein uS15 family. As to quaternary structure, part of the 30S ribosomal subunit. Forms a bridge to the 50S subunit in the 70S ribosome, contacting the 23S rRNA.

Functionally, one of the primary rRNA binding proteins, it binds directly to 16S rRNA where it helps nucleate assembly of the platform of the 30S subunit by binding and bridging several RNA helices of the 16S rRNA. Its function is as follows. Forms an intersubunit bridge (bridge B4) with the 23S rRNA of the 50S subunit in the ribosome. The polypeptide is Small ribosomal subunit protein uS15 (Pelotomaculum thermopropionicum (strain DSM 13744 / JCM 10971 / SI)).